The sequence spans 5005 residues: Bridge-like lipid transfer protein family member 1 (5005 aa).

The chain crosses the membrane as a helical span at residues 27 to 47; it reads VVWLLVATILSCGWIIYLTYY. Disordered regions lie at residues 692–718 and 1205–1314; these read RPAQKTSERVVSSPSMSPRPPVDPSEL and KSVG…ASVC. The segment covering 708-718 has biased composition (pro residues); the sequence is SPRPPVDPSEL. A compositionally biased stretch (basic and acidic residues) spans 1205–1215; the sequence is KSVGIEGERKT. Positions 1226 to 1240 are enriched in low complexity; the sequence is SHSSSSSSEENSSSS. Residues 1248 to 1275 are compositionally biased toward basic and acidic residues; sequence GEKESPSSAADDHSVQKDLLHSARRDDG. The segment covering 1278–1303 has biased composition (polar residues); the sequence is SVPTEISGTSPVSPNTQDKSVGQSPL. Phosphoserine occurs at positions 1301, 1305, and 1323. A Phosphothreonine modification is found at threonine 1325. Disordered regions lie at residues 1343 to 1376, 1399 to 1425, 1521 to 1544, and 1676 to 1698; these read SDVSRSDENVLDSPKQRRSFGSFPYTPSADSNSF, EEFEPISSDEGPGTYPGRKKKKKQMQQ, TNKRTSKSSLHRPLDLDTPTSEES, and FSENLSPKQDIRGTKTEHPMIGT. Phosphoserine is present on residues serine 1355 and serine 1406. Residues 1521–1530 show a composition bias toward basic residues; it reads TNKRTSKSSL. A compositionally biased stretch (basic and acidic residues) spans 1684 to 1693; that stretch reads QDIRGTKTEH. Phosphoserine is present on residues serine 1805 and serine 1808. 6 disordered regions span residues 1927–1991, 2165–2192, 2265–2288, 2367–2387, 2400–2420, and 2598–2677; these read RGGV…PLMP, PAQPLKPPATVDQEHEEGLGLDNGGGLQ, TSGDTATDSPVHVGRAGMPVKESP, ESPVTKSGHNSLPTGVAPNLP, SSDQNTLDGTHSQHSTSQDDV, and TAGS…KDVV. 2 stretches are compositionally biased toward polar residues: residues 1931 to 1948 and 1959 to 1971; these read LTSNNSSDSPTGSGYNTD and TSPSSDINGNSVS. 3 stretches are compositionally biased toward polar residues: residues 2367 to 2379, 2400 to 2418, and 2598 to 2608; these read ESPVTKSGHNSLP, SSDQNTLDGTHSQHSTSQD, and TAGSASPTPTF. 2 positions are modified to phosphoserine: serine 2601 and serine 2603. Residues 2619–2638 show a composition bias toward low complexity; that stretch reads SDFSRSSRGSLNGGNRVNNA. Positions 2643–2665 are enriched in basic and acidic residues; sequence ANNENNKKESRNKNSLGRSERRT. Phosphoserine is present on serine 2755. The tract at residues 2928-2967 is disordered; it reads RQPSTAPQPMKEDIATPLPSEKTPTSVNQTPIETNEFPQL. Over residues 2949–2964 the composition is skewed to polar residues; that stretch reads KTPTSVNQTPIETNEF. A phosphoserine mark is found at serine 3562, glutamate 3577, and serine 3653. 6 disordered regions span residues 3614-3662, 3686-3744, 3821-3843, 3935-3954, 4089-4145, and 4325-4396; these read YSRS…TFNI, SSNS…ERFY, RRSYDRSSRSLDQDSPSKKKKFQ, KTNTLLPPQPPPIPSAKGKG, TTYP…SSSS, and QSAS…ASQQ. Over residues 3686-3711 the composition is skewed to polar residues; the sequence is SSNSEGSCSVFSSPKTTGGFSPSVPF. A compositionally biased stretch (acidic residues) spans 3727-3736; that stretch reads EDSEKDEKDE. Basic and acidic residues predominate over residues 3821-3837; it reads RRSYDRSSRSLDQDSPS. A compositionally biased stretch (polar residues) spans 4097–4112; it reads SPGSNAPQTGAKTSAS. A compositionally biased stretch (low complexity) spans 4117–4145; that stretch reads PGSSGLGSPLGRSRHSSSQSDLTGSSSSS. Serine 4124 carries the post-translational modification Phosphoserine. Over residues 4325-4358 the composition is skewed to polar residues; sequence QSASFTHMPQSPNVFNEHMTNNTMSPGTAAQSLK. The span at 4359–4372 shows a compositional bias: low complexity; that stretch reads SPASIRSRSVSDSS. A compositionally biased stretch (polar residues) spans 4381-4396; the sequence is KTSTPVNKSNKAASQQ.

As to expression, highly expressed in testis and ovary. Weakly or not expressed in other tissues.

Its subcellular location is the cell membrane. The protein resides in the endoplasmic reticulum membrane. It localises to the mitochondrion membrane. Functionally, tube-forming lipid transport protein which provides phosphatidylethanolamine for glycosylphosphatidylinositol (GPI) anchor synthesis in the endoplasmic reticulum. Plays a role in endosomal trafficking and endosome recycling. Also involved in the actin cytoskeleton and cilia structural dynamics. Acts as a regulator of phagocytosis. The polypeptide is Bridge-like lipid transfer protein family member 1 (Bltp1) (Mus musculus (Mouse)).